The chain runs to 328 residues: 5,10-methylenetetrahydromethanopterin reductase (328 aa).

Belongs to the mer family.

It is found in the cytoplasm. The enzyme catalyses 5-methyl-5,6,7,8-tetrahydromethanopterin + oxidized coenzyme F420-(gamma-L-Glu)(n) + H(+) = 5,10-methylenetetrahydromethanopterin + reduced coenzyme F420-(gamma-L-Glu)(n). The protein operates within one-carbon metabolism; methanogenesis from CO(2); methyl-coenzyme M from 5,10-methylene-5,6,7,8-tetrahydromethanopterin: step 1/2. In terms of biological role, catalyzes the reversible reduction of methylene-H(4)MPT to methyl-H(4)MPT. The protein is 5,10-methylenetetrahydromethanopterin reductase of Methanosarcina barkeri (strain Fusaro / DSM 804).